The chain runs to 205 residues: Ephrin-A1 (205 aa).

The N-terminal stretch at 1-18 (MEFLWAPLLGLCCSLAAA) is a signal peptide. The Ephrin RBD domain occupies 19–151 (DRHTVFWNSS…KLKVTVSGKI (133 aa)). Asn-26 carries N-linked (GlcNAc...) asparagine glycosylation. 2 disulfides stabilise this stretch: Cys-51/Cys-92 and Cys-80/Cys-140. Ser-182 carries the GPI-anchor amidated serine lipid modification. Residues 183–205 (AAPRLSPLAWAVLLLPFLLLQTS) constitute a propeptide, removed in mature form.

Belongs to the ephrin family. Monomer. Homodimer. Forms heterodimers with EPHA2. Binds to the receptor tyrosine kinases EPHA2, EPHA3, EPHA4, EPHA5, EPHA6 and EPHA7. Also binds with low affinity to EPHA1. Undergoes proteolysis by a metalloprotease to give rise to a soluble monomeric form. In terms of processing, N-Glycosylation is required for binding to EPHA2 receptor and inducing its internalization.

It is found in the cell membrane. Its subcellular location is the secreted. Cell surface GPI-bound ligand for Eph receptors, a family of receptor tyrosine kinases which are crucial for migration, repulsion and adhesion during neuronal, vascular and epithelial development. Binds promiscuously Eph receptors residing on adjacent cells, leading to contact-dependent bidirectional signaling into neighboring cells. Plays an important role in angiogenesis and tumor neovascularization. The recruitment of VAV2, VAV3 and PI3-kinase p85 subunit by phosphorylated EPHA2 is critical for EFNA1-induced RAC1 GTPase activation and vascular endothelial cell migration and assembly. Exerts anti-oncogenic effects in tumor cells through activation and down-regulation of EPHA2. Activates EPHA2 by inducing tyrosine phosphorylation which leads to its internalization and degradation. Acts as a negative regulator in the tumorigenesis of gliomas by down-regulating EPHA2 and FAK. Can evoke collapse of embryonic neuronal growth cone and regulates dendritic spine morphogenesis. In Sus scrofa (Pig), this protein is Ephrin-A1 (EFNA1).